Consider the following 394-residue polypeptide: Bifunctional enzyme Fae/Hps (394 aa).

Residues 1–162 (MEFRIGEALI…YEKDRSFHPF (162 aa)) form a formaldehyde-activating enzyme region. The active-site Proton donor is histidine 18. Positions 20, 49, 67, 69, and 84 each coordinate substrate. Residues 163–394 (VGRKLTKLWD…TDQFRIMTDF (232 aa)) are 3-hexulose-6-phosphate synthase.

This sequence in the N-terminal section; belongs to the formaldehyde-activating enzyme family. In the C-terminal section; belongs to the HPS/KGPDC family. HPS subfamily.

It catalyses the reaction 5,6,7,8-tetrahydromethanopterin + formaldehyde = 5,10-methylenetetrahydromethanopterin + H2O. The enzyme catalyses D-ribulose 5-phosphate + formaldehyde = D-arabino-hex-3-ulose 6-phosphate. It functions in the pathway carbohydrate biosynthesis; D-ribose 5-phosphate biosynthesis. In terms of biological role, catalyzes the condensation of formaldehyde with tetrahydromethanopterin (H(4)MPT) to 5,10-methylenetetrahydromethanopterin. Its function is as follows. Catalyzes the reversible formation of ribulose-5-phosphate and formaldehyde from 3-hexulose-6-phosphate. In Archaeoglobus fulgidus (strain ATCC 49558 / DSM 4304 / JCM 9628 / NBRC 100126 / VC-16), this protein is Bifunctional enzyme Fae/Hps.